The primary structure comprises 514 residues: MALMQELYSTPASRLDSFVAQWLQPHREWKEEVLDAVRTVEEFLRQEHFQGKRGLDQDVRVLKVVKVGSFGNGTVLRSTREVELVAFLSCFHSFQEAAKHHKDVLRLIWKTMWQSQDLLDLGLEDLRMEQRVPDALVFTIQTRGTAEPITVTIVPAYRALGPSLPNSQPPPEVYVSLIKACGGPGNFCPSFSELQRNFVKHRPTKLKSLLRLVKHWYQQYVKARSPRANLPPLYALELLTIYAWEMGTEEDENFMLDEGFTTVMDLLLEYEVICIYWTKYYTLHNAIIEDCVRKQLKKERPIILDPADPTLNVAEGYRWDIVAQRASQCLKQDCCYDNRENPISSWNVKRARDIHLTVEQRGYPDFNLIVNPYEPIRKVKEKIRRTRGYSGLQRLSFQVPGSERQLLSSRCSLAKYGIFSHTHIYLLETIPSEIQVFVKNPDGGSYAYAINPNSFILGLKQQIEDQQGLPKKQQQLEFQGQVLQDWLGLGIYGIQDSDTLILSKKKGEALFPAS.

At Ala-2 the chain carries N-acetylalanine. Ubiquitin-like domains are found at residues 354-433 (IHLT…IPSE) and 434-509 (IQVF…KGEA).

It belongs to the 2-5A synthase family. In terms of assembly, specifically interacts with the ligand binding domain of the thyroid receptor (TR). TRIP14 does not require the presence of thyroid hormone for its interaction. Binds MBD1. As to expression, expressed in most tissues, with the highest levels in primary blood Leukocytes and other hematopoietic system tissues, colon, stomach and to some extent in testis.

The protein resides in the nucleus. Its subcellular location is the nucleolus. The protein localises to the cytoplasm. Does not have 2'-5'-OAS activity, but can bind double-stranded RNA. Displays antiviral activity against encephalomyocarditis virus (EMCV) and hepatitis C virus (HCV) via an alternative antiviral pathway independent of RNase L. The sequence is that of 2'-5'-oligoadenylate synthase-like protein (OASL) from Homo sapiens (Human).